The following is a 127-amino-acid chain: UPF0102 protein Mmwyl1_2395 (127 aa).

This sequence belongs to the UPF0102 family.

In Marinomonas sp. (strain MWYL1), this protein is UPF0102 protein Mmwyl1_2395.